The sequence spans 824 residues: Lon protease (824 aa).

A disordered region spans residues 1 to 23 (MNEPMSLFDDLPEEHDEPQEAPE). Residues 10 to 20 (DLPEEHDEPQE) show a composition bias toward acidic residues. The Lon N-terminal domain maps to 26-222 (LPMVVLGEMV…KVYLVLARQL (197 aa)). ATP is bound at residue 375 to 382 (GPPGVGKT). Residues 617–798 (QDEVGVATGV…DEVLRIALSR (182 aa)) form the Lon proteolytic domain. Catalysis depends on residues Ser704 and Lys747. Positions 800–824 (PTPANNQNGSHTNNRGQPSPAPAGT) are disordered. The span at 802-816 (PANNQNGSHTNNRGQ) shows a compositional bias: polar residues.

Belongs to the peptidase S16 family. As to quaternary structure, homohexamer. Organized in a ring with a central cavity.

The protein localises to the cytoplasm. The catalysed reaction is Hydrolysis of proteins in presence of ATP.. Its function is as follows. ATP-dependent serine protease that mediates the selective degradation of mutant and abnormal proteins as well as certain short-lived regulatory proteins. Required for cellular homeostasis and for survival from DNA damage and developmental changes induced by stress. Degrades polypeptides processively to yield small peptide fragments that are 5 to 10 amino acids long. Binds to DNA in a double-stranded, site-specific manner. The polypeptide is Lon protease (Chloroflexus aggregans (strain MD-66 / DSM 9485)).